The following is a 240-amino-acid chain: Ribonuclease 3 (240 aa).

An RNase III domain is found at 4 to 134 (SRQPLLDALG…LLGAIYLQHG (131 aa)). E44 contributes to the Mg(2+) binding site. Residue D48 is part of the active site. Mg(2+)-binding residues include D120 and E123. E123 is an active-site residue. The DRBM domain occupies 161 to 229 (DWKTSLQELT…AAAAWKALEV (69 aa)).

It belongs to the ribonuclease III family. Homodimer. Mg(2+) serves as cofactor.

It localises to the cytoplasm. The catalysed reaction is Endonucleolytic cleavage to 5'-phosphomonoester.. Functionally, digests double-stranded RNA. Involved in the processing of primary rRNA transcript to yield the immediate precursors to the large and small rRNAs (23S and 16S). Processes some mRNAs, and tRNAs when they are encoded in the rRNA operon. Processes pre-crRNA and tracrRNA of type II CRISPR loci if present in the organism. The sequence is that of Ribonuclease 3 from Mycobacterium bovis (strain ATCC BAA-935 / AF2122/97).